A 444-amino-acid polypeptide reads, in one-letter code: tRNA modification GTPase MnmE (444 aa).

(6S)-5-formyl-5,6,7,8-tetrahydrofolate contacts are provided by arginine 23, glutamate 82, and lysine 121. The TrmE-type G domain occupies 216 to 365 (GTSIVLAGLP…LKQALQKWLN (150 aa)). Asparagine 226 contacts K(+). GTP is bound by residues 226 to 231 (NAGKSS), 245 to 251 (TDIPGTT), and 270 to 273 (DSAG). Serine 230 is a binding site for Mg(2+). K(+)-binding residues include threonine 245, isoleucine 247, and threonine 250. Threonine 251 contributes to the Mg(2+) binding site. Lysine 444 serves as a coordination point for (6S)-5-formyl-5,6,7,8-tetrahydrofolate.

The protein belongs to the TRAFAC class TrmE-Era-EngA-EngB-Septin-like GTPase superfamily. TrmE GTPase family. In terms of assembly, homodimer. Heterotetramer of two MnmE and two MnmG subunits. K(+) is required as a cofactor.

The protein localises to the cytoplasm. Exhibits a very high intrinsic GTPase hydrolysis rate. Involved in the addition of a carboxymethylaminomethyl (cmnm) group at the wobble position (U34) of certain tRNAs, forming tRNA-cmnm(5)s(2)U34. The protein is tRNA modification GTPase MnmE of Chlamydia trachomatis serovar L2 (strain ATCC VR-902B / DSM 19102 / 434/Bu).